The primary structure comprises 154 residues: Protein FAM162A (154 aa).

The required for proapoptotic activity stretch occupies residues 76–102 (RFKKEDEIPETVSLEMLDAAKNKMRVK). Residues 103-120 (ISYLMIALTVVGCIFMVI) form a helical membrane-spanning segment.

This sequence belongs to the UPF0389 family. Interacts with HSP90AB1; HSP90AB1 is essential for FAM162A mitochondrial localization and pro-apoptotic activity. Interacts with VDAC2; the interaction is probably involved in inducing mitochondrial permeability transition.

It localises to the mitochondrion membrane. Its function is as follows. Proposed to be involved in regulation of apoptosis; the exact mechanism may differ between cell types/tissues. May be involved in hypoxia-induced cell death of transformed cells implicating cytochrome C release and caspase activation (such as CASP9) and inducing mitochondrial permeability transition. May be involved in hypoxia-induced cell death of neuronal cells probably by promoting release of AIFM1 from mitochondria to cytoplasm and its translocation to the nucleus; however, the involvement of caspases has been reported conflictingly. The chain is Protein FAM162A (FAM162A) from Homo sapiens (Human).